The sequence spans 165 residues: Ureidoglycolate lyase (165 aa).

The protein belongs to the ureidoglycolate lyase family. Homodimer. Requires Ni(2+) as cofactor.

It carries out the reaction (S)-ureidoglycolate = urea + glyoxylate. It functions in the pathway nitrogen metabolism; (S)-allantoin degradation. In terms of biological role, catalyzes the catabolism of the allantoin degradation intermediate (S)-ureidoglycolate, generating urea and glyoxylate. Involved in the utilization of allantoin as nitrogen source. This chain is Ureidoglycolate lyase, found in Chelativorans sp. (strain BNC1).